Here is a 62-residue protein sequence, read N- to C-terminus: Large ribosomal subunit protein bL28 (62 aa).

It belongs to the bacterial ribosomal protein bL28 family.

The protein is Large ribosomal subunit protein bL28 of Aliarcobacter butzleri (strain RM4018) (Arcobacter butzleri).